Reading from the N-terminus, the 170-residue chain is Protein SprT (170 aa).

One can recognise a SprT-like domain in the interval 25–165 (SEQFFDRTFA…QYCKGRLEPV (141 aa)). Histidine 78 is a binding site for Zn(2+). Glutamate 79 is an active-site residue. Residue histidine 82 coordinates Zn(2+).

This sequence belongs to the SprT family. The cofactor is Zn(2+).

It localises to the cytoplasm. In Actinobacillus succinogenes (strain ATCC 55618 / DSM 22257 / CCUG 43843 / 130Z), this protein is Protein SprT.